A 166-amino-acid chain; its full sequence is Plastocyanin, chloroplastic (166 aa).

A chloroplast-targeting transit peptide spans 1–67 (MASLTSAAVT…GAVLASNALA (67 aa)). Positions 68–166 (VEVLLGGSDG…AGMAGKITVN (99 aa)) constitute a Plastocyanin-like domain. Cu cation contacts are provided by His-104, Cys-151, His-154, and Met-159.

This sequence belongs to the plastocyanin family. Cu(2+) serves as cofactor.

It is found in the plastid. The protein localises to the chloroplast thylakoid membrane. Its function is as follows. Participates in electron transfer between P700 and the cytochrome b6-f complex in photosystem I. This is Plastocyanin, chloroplastic (PETE) from Fritillaria agrestis (Stinkbells).